A 501-amino-acid chain; its full sequence is Aldehyde dehydrogenase 1A1 (501 aa).

Residue serine 2 is modified to N-acetylserine. 2 positions are modified to N6-acetyllysine: lysine 91 and lysine 128. NAD(+) contacts are provided by residues 167–170 (IPWN), 193–196 (KPAE), 226–227 (GP), and 246–247 (GS). Lysine 252 is modified (N6-acetyllysine). Glutamate 269 acts as the Proton acceptor in catalysis. 269–271 (ELG) is a binding site for NAD(+). Cysteine 303 acts as the Nucleophile in catalysis. Residues 336 to 501 (LTPGVSQGPQ…VTIKISQKNS (166 aa)) are mediates interaction with PRMT3. Threonine 337 is subject to Phosphothreonine. 349–353 (EQYEK) lines the NAD(+) pocket. 2 positions are modified to N6-acetyllysine: lysine 353 and lysine 367. 400 to 402 (EIF) serves as a coordination point for NAD(+). Lysine 410 is subject to N6-acetyllysine. Serine 413 carries the phosphoserine modification. An N6-acetyllysine mark is found at lysine 419 and lysine 495.

It belongs to the aldehyde dehydrogenase family. In terms of assembly, homotetramer. Interacts with PRMT3; the interaction is direct, inhibits ALDH1A1 aldehyde dehydrogenase activity and is independent of the methyltransferase activity of PRMT3. The N-terminus is blocked most probably by acetylation.

The protein localises to the cytoplasm. Its subcellular location is the cytosol. The protein resides in the cell projection. It is found in the axon. The catalysed reaction is an aldehyde + NAD(+) + H2O = a carboxylate + NADH + 2 H(+). It carries out the reaction all-trans-retinal + NAD(+) + H2O = all-trans-retinoate + NADH + 2 H(+). The enzyme catalyses 9-cis-retinal + NAD(+) + H2O = 9-cis-retinoate + NADH + 2 H(+). It catalyses the reaction 11-cis-retinal + NAD(+) + H2O = 11-cis-retinoate + NADH + 2 H(+). The catalysed reaction is 13-cis-retinal + NAD(+) + H2O = 13-cis-retinoate + NADH + 2 H(+). It carries out the reaction 3-deoxyglucosone + NAD(+) + H2O = 2-dehydro-3-deoxy-D-gluconate + NADH + 2 H(+). The enzyme catalyses (E)-4-hydroxynon-2-enal + NAD(+) + H2O = (E)-4-hydroxynon-2-enoate + NADH + 2 H(+). It catalyses the reaction malonaldehyde + NAD(+) + H2O = 3-oxopropanoate + NADH + 2 H(+). The catalysed reaction is hexanal + NAD(+) + H2O = hexanoate + NADH + 2 H(+). It carries out the reaction propanal + NAD(+) + H2O = propanoate + NADH + 2 H(+). The enzyme catalyses acetaldehyde + NAD(+) + H2O = acetate + NADH + 2 H(+). It catalyses the reaction benzaldehyde + NAD(+) + H2O = benzoate + NADH + 2 H(+). The catalysed reaction is 4-aminobutanal + NAD(+) + H2O = 4-aminobutanoate + NADH + 2 H(+). It functions in the pathway cofactor metabolism; retinol metabolism. With respect to regulation, inhibited by duocarmycin analogs. Its function is as follows. Cytosolic dehydrogenase that catalyzes the irreversible oxidation of a wide range of aldehydes to their corresponding carboxylic acid. Functions downstream of retinol dehydrogenases and catalyzes the oxidation of retinaldehyde into retinoic acid, the second step in the oxidation of retinol/vitamin A into retinoic acid. This pathway is crucial to control the levels of retinol and retinoic acid, two important molecules which excess can be teratogenic and cytotoxic. Also oxidizes aldehydes resulting from lipid peroxidation like (E)-4-hydroxynon-2-enal/HNE, malonaldehyde and hexanal that form protein adducts and are highly cytotoxic. By participating for instance to the clearance of (E)-4-hydroxynon-2-enal/HNE in the lens epithelium prevents the formation of HNE-protein adducts and lens opacification. Also functions downstream of fructosamine-3-kinase in the fructosamine degradation pathway by catalyzing the oxidation of 3-deoxyglucosone, the carbohydrate product of fructosamine 3-phosphate decomposition, which is itself a potent glycating agent that may react with lysine and arginine side-chains of proteins. Also has an aminobutyraldehyde dehydrogenase activity and is probably part of an alternative pathway for the biosynthesis of GABA/4-aminobutanoate in midbrain, thereby playing a role in GABAergic synaptic transmission. This chain is Aldehyde dehydrogenase 1A1, found in Ovis aries (Sheep).